The chain runs to 500 residues: Beta-xylosidase (500 aa).

The active-site Proton donor is E160. Catalysis depends on E277, which acts as the Nucleophile.

The protein belongs to the glycosyl hydrolase 39 family.

The catalysed reaction is Hydrolysis of (1-&gt;4)-beta-D-xylans, to remove successive D-xylose residues from the non-reducing termini.. In Thermoanaerobacterium saccharolyticum (strain DSM 8691 / JW/SL-YS485), this protein is Beta-xylosidase (xynB).